The chain runs to 208 residues: Transmembrane protein 160 (208 aa).

Residues 1–45 (MASIRWLMGSRLSRFVCPFAQLVRQPVLRYVRPPVRALHRGSVRR) constitute a mitochondrion transit peptide. The next 3 helical transmembrane spans lie at 82–102 (GFLS…IAFV), 110–130 (AGYA…ASYV), and 147–167 (VLLH…AVSL). The span at 181-192 (DDEEHGADESSE) shows a compositional bias: acidic residues. The tract at residues 181–208 (DDEEHGADESSECAECRARRDREKGQDK) is disordered. The span at 194-208 (AECRARRDREKGQDK) shows a compositional bias: basic and acidic residues.

This sequence belongs to the TMEM160 family.

The protein resides in the mitochondrion inner membrane. The protein is Transmembrane protein 160 of Danio rerio (Zebrafish).